The following is a 339-amino-acid chain: DNA-directed RNA polymerase subunit alpha (339 aa).

The tract at residues 1-238 (MVDPIVTKNW…EQLSIFINFD (238 aa)) is alpha N-terminal domain (alpha-NTD). The alpha C-terminal domain (alpha-CTD) stretch occupies residues 250–339 (VEEQKLNENL…KAAPQGAPKV (90 aa)).

This sequence belongs to the RNA polymerase alpha chain family. As to quaternary structure, homodimer. The RNAP catalytic core consists of 2 alpha, 1 beta, 1 beta' and 1 omega subunit. When a sigma factor is associated with the core the holoenzyme is formed, which can initiate transcription.

The enzyme catalyses RNA(n) + a ribonucleoside 5'-triphosphate = RNA(n+1) + diphosphate. Functionally, DNA-dependent RNA polymerase catalyzes the transcription of DNA into RNA using the four ribonucleoside triphosphates as substrates. This Anaeromyxobacter dehalogenans (strain 2CP-C) protein is DNA-directed RNA polymerase subunit alpha.